We begin with the raw amino-acid sequence, 474 residues long: MSSVVTRFAPSPTGFLHIGGGRTALFNWLYARKHGGRMLLRIEDTDRERSTEAAIEAILDGLSWLGLDWDGDVIYQFARAARHREVAEGLLAAGRAYRCYASPEELTEMREAARREGRPLRYDGRWRDRNPSEAPPGVRPVIRLRAPVEGETVVEDEVQGRVVWQNKDLDDLVLLRSDGTPTYMLAVVVDDHDMGVTHVIRGDDHLTNAARQTQIYHALGWTVPSMSHIPLIHGPDGAKLSKRHGALGVDAYRGLGYLPAALRNYLVRLGWSHGDQEVFSTEEMVAAFDLKQIGRSPARFDFAKLENLNGQYIRATSDADLVAAIEAILPSQGPARGLPARFDDALRARFLAAMPGLKERAKTLIELLDSAYYLYAPRPLALDERAEGLLGNGGRERLAGVLPRLEALPDWSAASTEQAVRDFAEAAAVKLGHVAQPLRAALTGRATSPGLFDVMAVLGREESLGRLRDQARAA.

The 'HIGH' region signature appears at 10 to 20 (PSPTGFLHIGG). Positions 239 to 243 (KLSKR) match the 'KMSKS' region motif. Residue lysine 242 coordinates ATP.

This sequence belongs to the class-I aminoacyl-tRNA synthetase family. Glutamate--tRNA ligase type 1 subfamily. As to quaternary structure, monomer.

It is found in the cytoplasm. The enzyme catalyses tRNA(Glu) + L-glutamate + ATP = L-glutamyl-tRNA(Glu) + AMP + diphosphate. Functionally, catalyzes the attachment of glutamate to tRNA(Glu) in a two-step reaction: glutamate is first activated by ATP to form Glu-AMP and then transferred to the acceptor end of tRNA(Glu). This chain is Glutamate--tRNA ligase 1, found in Methylobacterium sp. (strain 4-46).